The chain runs to 334 residues: Fructose-1,6-bisphosphatase class 1 (334 aa).

Mg(2+)-binding residues include glutamate 90, aspartate 113, leucine 115, and aspartate 116. Substrate contacts are provided by residues 116–119 (DGSS), asparagine 209, tyrosine 242, and lysine 272. A Mg(2+)-binding site is contributed by glutamate 278.

This sequence belongs to the FBPase class 1 family. Homotetramer. Requires Mg(2+) as cofactor.

It localises to the cytoplasm. The catalysed reaction is beta-D-fructose 1,6-bisphosphate + H2O = beta-D-fructose 6-phosphate + phosphate. It functions in the pathway carbohydrate biosynthesis; gluconeogenesis. The protein is Fructose-1,6-bisphosphatase class 1 of Haemophilus ducreyi (strain 35000HP / ATCC 700724).